A 241-amino-acid polypeptide reads, in one-letter code: Phosphoadenosine 5'-phosphosulfate reductase (241 aa).

The disordered stretch occupies residues 221–241 (GADPRSGRWRGKAKTECGLHA). Cys237 serves as the catalytic Nucleophile; cysteine thiosulfonate intermediate.

This sequence belongs to the PAPS reductase family. CysH subfamily.

Its subcellular location is the cytoplasm. It catalyses the reaction [thioredoxin]-disulfide + sulfite + adenosine 3',5'-bisphosphate + 2 H(+) = [thioredoxin]-dithiol + 3'-phosphoadenylyl sulfate. The protein operates within sulfur metabolism; hydrogen sulfide biosynthesis; sulfite from sulfate: step 3/3. Functionally, catalyzes the formation of sulfite from phosphoadenosine 5'-phosphosulfate (PAPS) using thioredoxin as an electron donor. This chain is Phosphoadenosine 5'-phosphosulfate reductase, found in Gloeobacter violaceus (strain ATCC 29082 / PCC 7421).